The following is a 130-amino-acid chain: Small ribosomal subunit protein uS9 (130 aa).

The protein belongs to the universal ribosomal protein uS9 family.

The sequence is that of Small ribosomal subunit protein uS9 from Shewanella baltica (strain OS155 / ATCC BAA-1091).